A 204-amino-acid chain; its full sequence is High mobility group-T protein (204 aa).

DNA-binding regions (HMG box) lie at residues 8 to 78 (PRGK…RSYI) and 94 to 162 (PKRP…TAYR). The tract at residues 162–204 (RNKGKVPVSMPAKAAAPAKDDDDDDDDDDDDEDDDDDDDEDDE) is disordered. Residues 181 to 204 (DDDDDDDDDDDDEDDDDDDDEDDE) show a composition bias toward acidic residues.

The protein belongs to the HMGB family.

Its subcellular location is the nucleus. It is found in the chromosome. Functionally, binds preferentially single-stranded DNA and unwinds double-stranded DNA. The chain is High mobility group-T protein from Oncorhynchus mykiss (Rainbow trout).